Reading from the N-terminus, the 131-residue chain is Small ribosomal subunit protein uS8 (131 aa).

Belongs to the universal ribosomal protein uS8 family. In terms of assembly, part of the 30S ribosomal subunit. Contacts proteins S5 and S12.

Its function is as follows. One of the primary rRNA binding proteins, it binds directly to 16S rRNA central domain where it helps coordinate assembly of the platform of the 30S subunit. In Ralstonia pickettii (strain 12J), this protein is Small ribosomal subunit protein uS8.